Here is a 526-residue protein sequence, read N- to C-terminus: GMP synthase [glutamine-hydrolyzing] (526 aa).

In terms of domain architecture, Glutamine amidotransferase type-1 spans 10-208 (RILILDFGSQ…VVDLCGCEKL (199 aa)). The Nucleophile role is filled by Cys87. Catalysis depends on residues His182 and Glu184. Positions 209 to 401 (WTTENIIDDS…LGLPSDMVYR (193 aa)) constitute a GMPS ATP-PPase domain. Residue 236 to 242 (SGGVDSS) coordinates ATP.

Homodimer.

The catalysed reaction is XMP + L-glutamine + ATP + H2O = GMP + L-glutamate + AMP + diphosphate + 2 H(+). The protein operates within purine metabolism; GMP biosynthesis; GMP from XMP (L-Gln route): step 1/1. Its function is as follows. Catalyzes the synthesis of GMP from XMP. This Hydrogenovibrio crunogenus (strain DSM 25203 / XCL-2) (Thiomicrospira crunogena) protein is GMP synthase [glutamine-hydrolyzing].